A 349-amino-acid chain; its full sequence is Ferredoxin--NADP reductase 1 (349 aa).

Positions 36, 44, 48, 88, 123, 290, and 331 each coordinate FAD.

It belongs to the ferredoxin--NADP reductase type 2 family. As to quaternary structure, homodimer. The cofactor is FAD.

It carries out the reaction 2 reduced [2Fe-2S]-[ferredoxin] + NADP(+) + H(+) = 2 oxidized [2Fe-2S]-[ferredoxin] + NADPH. This is Ferredoxin--NADP reductase 1 from Bacillus thuringiensis (strain Al Hakam).